The chain runs to 799 residues: Protein-lysine N-methyltransferase SMYD4 (799 aa).

112 to 114 (RSA) lines the S-adenosyl-L-methionine pocket. An SET domain is found at 233 to 570 (LSVSLCTHPL…KGQEILHCYG (338 aa)). Residues C296, C299, C309, C312, C318, C322, H331, and C335 each contribute to the Zn(2+) site. Residues 296–335 (CHRCLKHTLATVPCGSCSYAKYCSQECMQQAWDLYHSTEC) form an MYND-type zinc finger. Residues 535 to 536 (NH), Y569, and F591 each bind S-adenosyl-L-methionine.

Belongs to the class V-like SAM-binding methyltransferase superfamily. As to quaternary structure, interacts (via MYND-type zinc finger) with HDAC1.

Its subcellular location is the nucleus. The protein resides in the cytoplasm. The enzyme catalyses L-lysyl-[protein] + S-adenosyl-L-methionine = N(6)-methyl-L-lysyl-[protein] + S-adenosyl-L-homocysteine + H(+). Protein-lysine N-methyltransferase. Monomethylates PRMT5, modulating its transcriptional activity. May also act as a histone methyltransferase. Plays a critical role in cardiac development. Acts as a key epigenetic regulator of gene expression during cardiac development via its dual activities as a methyltransferase and negative regulator of HDAC1. The polypeptide is Protein-lysine N-methyltransferase SMYD4 (Smyd4) (Mus musculus (Mouse)).